We begin with the raw amino-acid sequence, 107 residues long: Thioredoxin (107 aa).

Residues 2–107 enclose the Thioredoxin domain; that stretch reads SVEAVVKQVD…GIRELIQANA (106 aa). Residues C34 and C37 each act as nucleophile in the active site. C34 and C37 are oxidised to a cystine.

It belongs to the thioredoxin family.

Its function is as follows. Participates in various redox reactions through the reversible oxidation of its active center dithiol to a disulfide and catalyzes dithiol-disulfide exchange reactions. The sequence is that of Thioredoxin (TRX) from Echinococcus granulosus (Hydatid tapeworm).